The following is a 384-amino-acid chain: Sodium channel protein Nach (384 aa).

Over 1 to 319 (AAFAYFSGFM…LVSHLGSAFS (319 aa)) the chain is Extracellular. N-linked (GlcNAc...) asparagine glycosylation is found at asparagine 32 and asparagine 215. Residues 320–340 (LFVGMSMLSLVEIIYYFTVIL) form a helical membrane-spanning segment. The Cytoplasmic portion of the chain corresponds to 341–384 (RRNYVQECRARQKLQTLHRRPNFGWPGDKNSNQQKSVFYIRGRN).

It belongs to the amiloride-sensitive sodium channel (TC 1.A.6) family.

The protein resides in the membrane. In terms of biological role, part of a complex that plays a role in tracheal liquid clearance. Probable role in sodium transport. This Drosophila virilis (Fruit fly) protein is Sodium channel protein Nach (Nach).